The following is a 449-amino-acid chain: tRNA (guanine(37)-N(1))-methyltransferase (449 aa).

Residues H216, 254–255, 282–283, and N345 contribute to the S-adenosyl-L-methionine site; these read DL and DG.

Belongs to the class I-like SAM-binding methyltransferase superfamily. TRM5/TYW2 family. As to quaternary structure, monomer.

It is found in the mitochondrion matrix. The protein resides in the nucleus. Its subcellular location is the cytoplasm. It carries out the reaction guanosine(37) in tRNA + S-adenosyl-L-methionine = N(1)-methylguanosine(37) in tRNA + S-adenosyl-L-homocysteine + H(+). Its function is as follows. Specifically methylates the N1 position of guanosine-37 in various cytoplasmic and mitochondrial tRNAs. Methylation is not dependent on the nature of the nucleoside 5' of the target nucleoside. This is the first step in the biosynthesis of wybutosine (yW), a modified base adjacent to the anticodon of tRNAs and required for accurate decoding. This Candida albicans (strain SC5314 / ATCC MYA-2876) (Yeast) protein is tRNA (guanine(37)-N(1))-methyltransferase.